The primary structure comprises 479 residues: Auxin transporter-like protein 1 (479 aa).

Over 1-58 the chain is Cytoplasmic; the sequence is MLSEKQGEETMMSSLNETIELNEEREEEKGASPGSGFKNFLWHGGSVYDAWFSCASNQ. A helical transmembrane segment spans residues 59 to 76; it reads VAQVLLTLPYSFSQLGMI. At 77 to 78 the chain is on the extracellular side; it reads SG. The helical transmembrane segment at 79-99 threads the bilayer; the sequence is IIFQVFYGLMGSWTAYLISIL. At 100–134 the chain is on the cytoplasmic side; the sequence is YVEYRSRKEKENVSFKNHVIQWFEVLEGLLGPYWK. The helical transmembrane segment at 135–155 threads the bilayer; the sequence is AIGLAFNCTFLLFGSVIQLIA. Topologically, residues 156-171 are extracellular; it reads CASNIYYINDHLDKRT. The helical transmembrane segment at 172 to 192 threads the bilayer; that stretch reads WTYIFGACCATTVFIPSFHNY. Residues 193-195 lie on the Cytoplasmic side of the membrane; it reads RIW. A helical membrane pass occupies residues 196-216; that stretch reads SFLGLGMTTYTAWYMTIAAIV. Topologically, residues 217–231 are extracellular; the sequence is HGQVENVVHSGPKKM. Residues 232-252 traverse the membrane as a helical segment; the sequence is VWYFTGATNILYTFGGHAVTV. Residues 253–265 lie on the Cytoplasmic side of the membrane; it reads EIMHAMWKPQKFK. The helical transmembrane segment at 266–286 threads the bilayer; it reads AIYFFATLYVFTLTLPSAIAV. Residues 287-313 are Extracellular-facing; that stretch reads YWAFGDQLLDHSNAFSLLPRNAWRDAG. Residues 314 to 334 form a helical membrane-spanning segment; that stretch reads VILMLIHQFITFGFACTPLYF. At 335–355 the chain is on the cytoplasmic side; it reads VWEKVIGMHDTKSIFLRALAR. Residues 356-376 traverse the membrane as a helical segment; it reads LPVVIPIWFLAIIFPFFGPIN. Serine 377 is a topological domain (extracellular). Residues 378 to 398 traverse the membrane as a helical segment; it reads AVGALLVSFTVYVIPASAHML. Over 399 to 421 the chain is Cytoplasmic; sequence TYRSASARQNAAEKLPKVIPSWT. A helical membrane pass occupies residues 422-442; the sequence is LMYVINAFVVIWVTIVGFGFG. At 443 to 479 the chain is on the extracellular side; that stretch reads GWASMTNFIKQVDTFGLFAKCYQCPPKLPASNHTMHH. N-linked (GlcNAc...) asparagine glycosylation occurs at asparagine 474.

It belongs to the amino acid/polyamine transporter 2 family. Amino acid/auxin permease (AAAP) (TC 2.A.18.1) subfamily. Shoots and roots of nodulating plants. Higher levels in roots, flowers and stems, lower in nodules, leaves, petioles and shoot apices.

It localises to the cell membrane. Functionally, carrier protein involved in proton-driven auxin influx. Mediates the formation of auxin gradient from developing leaves (site of auxin biosynthesis) to tips by contributing to the loading of auxin in vascular tissues and facilitating acropetal (base to tip) auxin transport within inner tissues of the root apex, and basipetal (tip to base) auxin transport within outer tissues of the root apex. May be involved in lateral roots and nodules formation. This is Auxin transporter-like protein 1 (LAX1) from Medicago truncatula (Barrel medic).